Here is a 146-residue protein sequence, read N- to C-terminus: Hemoglobin subunit delta (146 aa).

Residues H2–H146 form the Globin domain. S50 is modified (phosphoserine). The heme b site is built by H63 and H92.

It belongs to the globin family. As to quaternary structure, heterotetramer of two delta chains and two alpha chains. As to expression, red blood cells.

The chain is Hemoglobin subunit delta (HBD) from Saimiri sciureus (Common squirrel monkey).